A 101-amino-acid chain; its full sequence is DNA-binding protein HU (101 aa).

The protein belongs to the bacterial histone-like protein family. Homodimer.

Functionally, histone-like DNA-binding protein which is capable of wrapping DNA to stabilize it, and thus to prevent its denaturation under extreme environmental conditions. The chain is DNA-binding protein HU (hup) from Rickettsia bellii (strain RML369-C).